Consider the following 178-residue polypeptide: MAELTTLARPYAKAAFEHAQAHQQLANWSAMLGLAAAVSQDDTMQRLLKAPRLTSAEKAATFIDVCGDKFNAQAQNFIHVAAENDRLLLLPEIAALFDLYKAEQEKSVDVEVTSAFALNQEQQDKLAKVLSARLGQEVRLHASEDASLIGGVVIRAGDLVIDGSVRGKIAKLAEALKS.

Belongs to the ATPase delta chain family. As to quaternary structure, F-type ATPases have 2 components, F(1) - the catalytic core - and F(0) - the membrane proton channel. F(1) has five subunits: alpha(3), beta(3), gamma(1), delta(1), epsilon(1). F(0) has three main subunits: a(1), b(2) and c(10-14). The alpha and beta chains form an alternating ring which encloses part of the gamma chain. F(1) is attached to F(0) by a central stalk formed by the gamma and epsilon chains, while a peripheral stalk is formed by the delta and b chains.

The protein resides in the cell inner membrane. In terms of biological role, f(1)F(0) ATP synthase produces ATP from ADP in the presence of a proton or sodium gradient. F-type ATPases consist of two structural domains, F(1) containing the extramembraneous catalytic core and F(0) containing the membrane proton channel, linked together by a central stalk and a peripheral stalk. During catalysis, ATP synthesis in the catalytic domain of F(1) is coupled via a rotary mechanism of the central stalk subunits to proton translocation. This protein is part of the stalk that links CF(0) to CF(1). It either transmits conformational changes from CF(0) to CF(1) or is implicated in proton conduction. The protein is ATP synthase subunit delta of Pseudomonas putida (strain ATCC 700007 / DSM 6899 / JCM 31910 / BCRC 17059 / LMG 24140 / F1).